The primary structure comprises 172 residues: Oleosin 18 kDa (172 aa).

Position 2 is an N-acetylalanine (alanine 2). The interval 2-38 (ADRDRAGQYYQQQRGQVGETVKGILPEKAPSASQALT) is polar. The hydrophobic stretch occupies residues 39 to 110 (VATLFPLGGL…GGLSSLTFLA (72 aa)). 3 helical membrane passes run 42–62 (LFPL…ASVV), 70–90 (VFLI…LAVA), and 91–111 (GFLT…FLAN). Residues 147 to 172 (HAIQGRADQAGTGAGAGGGAGTKTSS) form a disordered region. Gly residues predominate over residues 158-172 (TGAGAGGGAGTKTSS).

Belongs to the oleosin family.

The protein localises to the lipid droplet. The protein resides in the membrane. Its function is as follows. May have a structural role to stabilize the lipid body during desiccation of the seed by preventing coalescence of the oil. Probably interacts with both lipid and phospholipid moieties of lipid bodies. May also provide recognition signals for specific lipase anchorage in lipolysis during seedling growth. In Oryza sativa subsp. indica (Rice), this protein is Oleosin 18 kDa (OLE18).